The primary structure comprises 20 residues: Tetracycline resistance leader peptide (20 aa).

The chain is Tetracycline resistance leader peptide (tetL) from Bacillus cereus.